The chain runs to 230 residues: Leucyl/phenylalanyl-tRNA--protein transferase (230 aa).

It belongs to the L/F-transferase family.

It is found in the cytoplasm. The catalysed reaction is N-terminal L-lysyl-[protein] + L-leucyl-tRNA(Leu) = N-terminal L-leucyl-L-lysyl-[protein] + tRNA(Leu) + H(+). It carries out the reaction N-terminal L-arginyl-[protein] + L-leucyl-tRNA(Leu) = N-terminal L-leucyl-L-arginyl-[protein] + tRNA(Leu) + H(+). It catalyses the reaction L-phenylalanyl-tRNA(Phe) + an N-terminal L-alpha-aminoacyl-[protein] = an N-terminal L-phenylalanyl-L-alpha-aminoacyl-[protein] + tRNA(Phe). Functions in the N-end rule pathway of protein degradation where it conjugates Leu, Phe and, less efficiently, Met from aminoacyl-tRNAs to the N-termini of proteins containing an N-terminal arginine or lysine. This Rhodopseudomonas palustris (strain BisB18) protein is Leucyl/phenylalanyl-tRNA--protein transferase.